Consider the following 378-residue polypeptide: Beta sliding clamp (378 aa).

Belongs to the beta sliding clamp family. As to quaternary structure, forms a ring-shaped head-to-tail homodimer around DNA which binds and tethers DNA polymerases and other proteins to the DNA. The DNA replisome complex has a single clamp-loading complex (3 tau and 1 each of delta, delta', psi and chi subunits) which binds 3 Pol III cores (1 core on the leading strand and 2 on the lagging strand) each with a beta sliding clamp dimer. Additional proteins in the replisome are other copies of gamma, psi and chi, Ssb, DNA helicase and RNA primase. Interacts with YabA, and via YabA, with DnaA. During sporulation probably interacts with SirA.

It localises to the cytoplasm. It is found in the nucleoid. Confers DNA tethering and processivity to DNA polymerases and other proteins. Acts as a clamp, forming a ring around DNA (a reaction catalyzed by the clamp-loading complex) which diffuses in an ATP-independent manner freely and bidirectionally along dsDNA. Initially characterized for its ability to contact the catalytic subunit of DNA polymerase III (Pol III), a complex, multichain enzyme responsible for most of the replicative synthesis in bacteria; Pol III exhibits 3'-5' exonuclease proofreading activity. The beta chain is required for initiation of replication as well as for processivity of DNA replication. Overexpression in vivo stimulates inititation of DNA replication from oriC. Increased levels of DnaN remove YabA from its association with DnaA on the chromosome, allowing DnaA to bind to its targets. Its interaction with DnaA probably serves as a sink to prevent excessive replication initiation. This Bacillus subtilis (strain 168) protein is Beta sliding clamp.